A 456-amino-acid chain; its full sequence is Aminotransferase ALD1, chloroplastic (456 aa).

A chloroplast-targeting transit peptide spans 1–43 (MVSLMFFSSASPLCSSPSKIPKASLDFEMKKLGGSTKLVRNVN). Residues tyrosine 108, 142 to 143 (AQ), asparagine 223, aspartate 251, tyrosine 254, serine 281, serine 283, arginine 292, and asparagine 323 contribute to the pyridoxal 5'-phosphate site.

Belongs to the class-I pyridoxal-phosphate-dependent aminotransferase family. LL-diaminopimelate aminotransferase subfamily. Pyridoxal 5'-phosphate serves as cofactor. Highly expressed in senescing leaves, flowers, siliques and seeds.

The protein localises to the plastid. It localises to the chloroplast. In terms of biological role, aminotransferase involved in local and systemic acquired resistance (SAR) to the bacterial pathogen P.syringae. Required for salicylic acid (SA) and camalexin accumulation upon pathogen infection. Possesses aminotransferase activity in vitro and may generate amino-acid-derived defense signals in vivo. May be involved in ethylene-induced senescence signaling. Involved in the biosynthesis of pipecolate (Pip), a metabolite that orchestrates defense amplification, positive regulation of SA biosynthesis, and priming to guarantee effective local resistance induction and the establishment of SAR. Converts lysine to alpha-keto-epsilon-aminocaproate, which then can spontaneously cyclize to form delta-(1)-piperideine-2-carboxylate (P2C). P2C is converted to Pip by SARD4. May produce non-Pip metabolites that play roles in immunity. Involved in the synthesis of distinct metabolite signals that affect basal and early defenses, and later defense responses. The protein is Aminotransferase ALD1, chloroplastic of Arabidopsis thaliana (Mouse-ear cress).